We begin with the raw amino-acid sequence, 740 residues long: DNA ligase (740 aa).

Positions methionine 1–proline 20 are disordered. NAD(+) contacts are provided by residues aspartate 56 to aspartate 60, serine 105 to isoleucine 106, and glutamate 142. The active-site N6-AMP-lysine intermediate is lysine 144. NAD(+)-binding residues include arginine 165, glutamate 201, lysine 322, and lysine 346. Zn(2+) contacts are provided by cysteine 471, cysteine 474, cysteine 489, and cysteine 495. The region spanning alanine 654 to glycine 740 is the BRCT domain.

It belongs to the NAD-dependent DNA ligase family. LigA subfamily. Requires Mg(2+) as cofactor. The cofactor is Mn(2+).

The enzyme catalyses NAD(+) + (deoxyribonucleotide)n-3'-hydroxyl + 5'-phospho-(deoxyribonucleotide)m = (deoxyribonucleotide)n+m + AMP + beta-nicotinamide D-nucleotide.. DNA ligase that catalyzes the formation of phosphodiester linkages between 5'-phosphoryl and 3'-hydroxyl groups in double-stranded DNA using NAD as a coenzyme and as the energy source for the reaction. It is essential for DNA replication and repair of damaged DNA. The protein is DNA ligase of Acidovorax ebreus (strain TPSY) (Diaphorobacter sp. (strain TPSY)).